Consider the following 654-residue polypeptide: Insulin receptor substrate 1 (654 aa).

The 105-residue stretch at 3–107 (DIKKCGYLRK…WYQAILEVQA (105 aa)) folds into the PH domain. Tyrosine 36 is subject to Phosphotyrosine. Positions 126–230 (FREVWQVSVR…EAMKSLSEEF (105 aa)) constitute an IRS-type PTB domain. The interval 228–329 (EEFRPRTKSQ…EYGSSPGVLE (102 aa)) is disordered. Residues 235 to 245 (KSQSLSSTPIS) show a composition bias toward polar residues. Serine 276 is subject to Phosphoserine. Over residues 307-321 (NESSADYGSASSDEY) the composition is skewed to polar residues. Phosphotyrosine; by INSR is present on tyrosine 345. Short sequence motifs (YXXM motif) lie at residues 345–348 (YISM), 384–387 (YAMM), 398–401 (YMPM), 411–414 (YMPM), 430–433 (YVMM), and 466–469 (YMNM). A phosphotyrosine; by INSR mark is found at tyrosine 398 and tyrosine 411. Phosphotyrosine is present on tyrosine 430. Disordered regions lie at residues 473–494 (SRSASSTPPPQEAFLSSPGGPC) and 507–532 (YKMEPQPSARASCSSSSDSLEEVNAG). The span at 514-524 (SARASCSSSSD) shows a compositional bias: low complexity. The residue at position 563 (tyrosine 563) is a Phosphotyrosine; by INSR.

Interacts with the NPXY motif of tyrosine-phosphorylated igf1r and insr via the PTB domain. Binds to phosphatidylinositol 3-kinase p85 subunit via the phosphorylated YXXM motifs.

Its function is as follows. May mediate the control of various cellular processes by insulin. When phosphorylated by the insulin receptor binds specifically to various cellular proteins containing SH2 domains such as phosphatidylinositol 3-kinase p85 subunit or grb2. Activates phosphatidylinositol 3-kinase when bound to the regulatory p85 subunit. In Xenopus tropicalis (Western clawed frog), this protein is Insulin receptor substrate 1.